The primary structure comprises 128 residues: Aspartate 1-decarboxylase (128 aa).

Catalysis depends on Ser-25, which acts as the Schiff-base intermediate with substrate; via pyruvic acid. Ser-25 is subject to Pyruvic acid (Ser). Thr-57 is a binding site for substrate. Catalysis depends on Tyr-58, which acts as the Proton donor. Position 73–75 (73–75) interacts with substrate; the sequence is GSA.

The protein belongs to the PanD family. Heterooctamer of four alpha and four beta subunits. It depends on pyruvate as a cofactor. Post-translationally, is synthesized initially as an inactive proenzyme, which is activated by self-cleavage at a specific serine bond to produce a beta-subunit with a hydroxyl group at its C-terminus and an alpha-subunit with a pyruvoyl group at its N-terminus.

Its subcellular location is the cytoplasm. The enzyme catalyses L-aspartate + H(+) = beta-alanine + CO2. Its pathway is cofactor biosynthesis; (R)-pantothenate biosynthesis; beta-alanine from L-aspartate: step 1/1. Catalyzes the pyruvoyl-dependent decarboxylation of aspartate to produce beta-alanine. The polypeptide is Aspartate 1-decarboxylase (Burkholderia vietnamiensis (strain G4 / LMG 22486) (Burkholderia cepacia (strain R1808))).